The chain runs to 429 residues: MQFKNALTATAILSASALAANSSTSIPSSCSIGTSATATAQADLDKISGCSTIVGNLTITGDLGSAALASIQEIDGSLTIFNSSSLSSFSADSIKKITGDLNMQELIILTSASFGSLQEVDSINMVTLPAISTFSTDLQNANNIIVSDTTLESVEGFSTLKKVNVFNINNNRYLNSFQSSLESVSDSLQFSSNGDNTTLAFDNLVWANNITLRDVNSISFGSLQTVNASLGFINNTLPSLNLTQLSKVGQSLSIVSNDELSKAAFSNLTTVGGGFIIANNTQLKVIDGFNKVQTVGGAIEFTGNFSTLDLSSLKSVRGGAKFDSSSSNFSCNALKKLQSNGAIQGDSFVCKNGATSTSVKLSSTSTESSKSSATSSASSSGDASNAQANVSASASSSSSSSKKSKGAAPELVPATSFMGVVAAVAVALL.

The first 19 residues, 1-19 (MQFKNALTATAILSASALA), serve as a signal peptide directing secretion. N-linked (GlcNAc...) asparagine glycans are attached at residues N21, N56, N82, N196, N209, N227, N234, N241, N267, N279, N304, and N328. S339 is subject to Phosphoserine. The span at 361–401 (LSSTSTESSKSSATSSASSSGDASNAQANVSASASSSSSSS) shows a compositional bias: low complexity. Residues 361 to 410 (LSSTSTESSKSSATSSASSSGDASNAQANVSASASSSSSSSKKSKGAAPE) form a disordered region. An N-linked (GlcNAc...) asparagine glycan is attached at N389. A lipid anchor (GPI-anchor amidated glycine) is attached at G406. A propeptide spans 407-429 (AAPELVPATSFMGVVAAVAVALL) (removed in mature form).

Belongs to the SPS2 family. In terms of processing, the GPI-anchor is attached to the protein in the endoplasmic reticulum and serves to target the protein to the cell surface. There, the glucosamine-inositol phospholipid moiety is cleaved off and the GPI-modified mannoprotein is covalently attached via its lipidless GPI glycan remnant to the 1,6-beta-glucan of the outer cell wall layer.

Its subcellular location is the cell membrane. It is found in the secreted. The protein resides in the cell wall. In terms of biological role, required for proper cell wall integrity and for the correct assembly of the mannoprotein outer layer of the cell wall. Important for apical bud growth. The polypeptide is Cell wall protein ECM33 (ECM33) (Saccharomyces cerevisiae (strain AWRI1631) (Baker's yeast)).